A 136-amino-acid chain; its full sequence is Large ribosomal subunit protein uL16 (136 aa).

Belongs to the universal ribosomal protein uL16 family. As to quaternary structure, part of the 50S ribosomal subunit.

Its function is as follows. Binds 23S rRNA and is also seen to make contacts with the A and possibly P site tRNAs. This is Large ribosomal subunit protein uL16 from Shewanella loihica (strain ATCC BAA-1088 / PV-4).